Here is a 480-residue protein sequence, read N- to C-terminus: Adenosylmethionine-8-amino-7-oxononanoate aminotransferase (480 aa).

Residue 126-127 (GS) participates in pyridoxal 5'-phosphate binding. Tyrosine 160 contacts substrate. Aspartate 270 is a pyridoxal 5'-phosphate binding site. Lysine 314 is modified (N6-(pyridoxal phosphate)lysine). Glycine 350 provides a ligand contact to substrate. A pyridoxal 5'-phosphate-binding site is contributed by 351-352 (PT). Arginine 441 serves as a coordination point for substrate.

The protein belongs to the class-III pyridoxal-phosphate-dependent aminotransferase family. BioA subfamily. It depends on pyridoxal 5'-phosphate as a cofactor.

It carries out the reaction (8S)-8-amino-7-oxononanoate + S-adenosyl-L-methionine = S-adenosyl-4-methylsulfanyl-2-oxobutanoate + (7R,8S)-7,8-diammoniononanoate. Its pathway is cofactor biosynthesis; biotin biosynthesis; 7,8-diaminononanoate from 8-amino-7-oxononanoate (SAM route): step 1/1. Functionally, catalyzes the transfer of the alpha-amino group from S-adenosyl-L-methionine (SAM) to 7-keto-8-aminopelargonic acid (KAPA) to form 7,8-diaminopelargonic acid (DAPA). It is the only aminotransferase known to utilize SAM as an amino donor. This chain is Adenosylmethionine-8-amino-7-oxononanoate aminotransferase, found in Saccharomyces cerevisiae (strain ATCC 204508 / S288c) (Baker's yeast).